Here is a 404-residue protein sequence, read N- to C-terminus: MPGISASASRIKKWEMEEYDQYQHYFYDDHNLDEDFFKSTAPSEDIWKKFELVPTPPMSPVRILEGSGPSPGDRLEWVSQFLGQDDEQEGLCKLNAEETLENLSSIIIQDCMWSSFSASQQLEKVVSERLSCSAQSKLSGKAQCVPADVPALNSLATDCVDPAAVLTFPLSSSCKKQVSSGSESRTDSSDDEEIDVVTVEHKQNKSRLVNARKPVTITVRADPHDPCMKRFHISIHQQQHNYAARSPDSYPEEEPPRKKIRQEIVQPRLASTPQTPERKSPLPSPSVPAQSPTVSASPTHTSYHLKSQPSSPQSSDCEDTDKRKTHNFLERKRRNDLRSRFLALRDEIPGLVDCPKTPKVVILTKATEYLRTLHVSDRQKAQEKKQLKSKQQQLLRRLAELKRA.

Disordered regions lie at residues 175 to 195 (KKQV…EEID) and 238 to 331 (QQHN…FLER). Over residues 287-315 (VPAQSPTVSASPTHTSYHLKSQPSSPQSS) the composition is skewed to polar residues. A bHLH domain is found at 321–373 (DKRKTHNFLERKRRNDLRSRFLALRDEIPGLVDCPKTPKVVILTKATEYLRTL). The leucine-zipper stretch occupies residues 373-401 (LHVSDRQKAQEKKQLKSKQQQLLRRLAEL).

Efficient DNA binding requires dimerization with another bHLH protein. Binds DNA as a heterodimer with max.

The protein resides in the nucleus. This chain is Protein L-Myc-1b, found in Danio rerio (Zebrafish).